An 859-amino-acid chain; its full sequence is Ribose import ATP-binding protein RbsA 1 (859 aa).

A disordered region spans residues 1–351 (MRASLENGDD…AARAPDEASE (351 aa)). Positions 1 to 353 (MRASLENGDD…RAPDEASEEA (353 aa)) are unknown. Positions 8 to 17 (GDDHDAHRLV) are enriched in basic and acidic residues. Basic residues predominate over residues 28–43 (RAARRRAFARARRGER). Composition is skewed to basic and acidic residues over residues 44 to 80 (RARGTAEDRHDVPGAEQPVLRDDAKGARRGGRVDRRA), 89 to 129 (RREQ…EEGG), and 137 to 167 (RERERPGRRVRRLEEFRRGRDVVRLPREGDR). The span at 168–179 (RRRRSRDPRRHP) shows a compositional bias: basic residues. Composition is skewed to basic and acidic residues over residues 193–214 (GAREIPEREDRRRAERQAGARE), 239–250 (RLDGRAVRDRGV), 263–281 (AGGDRGDAEAELEVHRDVR), 288–301 (DSPRDRHRAREEVG), and 308–323 (DSGRREADRQGQREDV). ABC transporter domains follow at residues 358–594 (LALT…VGRR) and 607–851 (RDAA…TSDV). 390-397 (GENGAGKS) is a binding site for ATP.

This sequence belongs to the ABC transporter superfamily. Ribose importer (TC 3.A.1.2.1) family. The complex is composed of an ATP-binding protein (RbsA), two transmembrane proteins (RbsC) and a solute-binding protein (RbsB).

The protein resides in the cell inner membrane. The enzyme catalyses D-ribose(out) + ATP + H2O = D-ribose(in) + ADP + phosphate + H(+). Part of the ABC transporter complex RbsABC involved in ribose import. Responsible for energy coupling to the transport system. This Burkholderia pseudomallei (strain 1710b) protein is Ribose import ATP-binding protein RbsA 1.